A 145-amino-acid chain; its full sequence is MHKKLKAWGGATGLFVVALGVTIIALPMRQKNSHGTMIIDGTVTQIFSTYQGNLSNVWLTQTDPQGNVVKSWTTRYQTLPDPSSQKLNLIPDYSQSNASRDYNVLSIYQLGKGCFLAFPYKLLTAEKMLVFLSKRFLGSYHEPPR.

Functionally, involved in TCP pilus biogenesis. This chain is Toxin coregulated pilus biosynthesis protein H (tcpH), found in Vibrio cholerae serotype O1 (strain ATCC 39315 / El Tor Inaba N16961).